Here is a 349-residue protein sequence, read N- to C-terminus: D-alanine--D-alanine ligase (349 aa).

Residues Lys132 to Asp335 form the ATP-grasp domain. Val162 to Glu217 serves as a coordination point for ATP. Mg(2+) contacts are provided by Asp289, Glu302, and Asn304.

This sequence belongs to the D-alanine--D-alanine ligase family. Requires Mg(2+) as cofactor. The cofactor is Mn(2+).

The protein resides in the cytoplasm. It catalyses the reaction 2 D-alanine + ATP = D-alanyl-D-alanine + ADP + phosphate + H(+). It functions in the pathway cell wall biogenesis; peptidoglycan biosynthesis. Cell wall formation. The polypeptide is D-alanine--D-alanine ligase (Lactococcus lactis subsp. lactis (strain IL1403) (Streptococcus lactis)).